The following is a 35-amino-acid chain: ECRYLFGGCKTTADCCKHLGCKFRDKYCAWDFTFS.

3 disulfide bridges follow: cysteine 2-cysteine 16, cysteine 9-cysteine 21, and cysteine 15-cysteine 28. The interval 4–6 (YLF) is involved in active face.

This sequence belongs to the neurotoxin 10 (Hwtx-1) family. 09 (HaTx) subfamily. Expressed by the venom gland.

It is found in the secreted. In terms of biological role, inhibitor of voltage-gated potassium channels. Inhibits Kv2.1/KCNB1 channels, by shifting activation of the channel to more depolarized voltages. The toxin binding sites may be situated on the S3-S4 extracellular linker of the channel. One, two, three or four toxin molecules may bind the Kv2.1/KCNB1 channel. May need to partition into the membrane in order to bind to the channel. Antibacterial activity is not observed. This is Kappa-theraphotoxin-Gr1b from Grammostola rosea (Chilean rose tarantula).